The primary structure comprises 303 residues: Protein REVEILLE 5 (303 aa).

The HTH myb-type domain occupies 54 to 108; the sequence is TIKKSRENWTDQEHDKFLEALHLFDRDWKKIEAFVGSKTVVQIRSHAQKYFLKVQ. The segment at residues 81 to 104 is a DNA-binding region (H-T-H motif); the sequence is WKKIEAFVGSKTVVQIRSHAQKYF. The disordered stretch occupies residues 109-130; the sequence is KSGANEHLPPPRPKRKASHPYP.

The protein resides in the nucleus. Probable transcription factor. This chain is Protein REVEILLE 5 (RVE5), found in Arabidopsis thaliana (Mouse-ear cress).